The following is a 379-amino-acid chain: RIB43A-like with coiled-coils protein 1 (379 aa).

The segment at 1 to 21 is disordered; sequence MYNINQSTDTKEAAAIEARRN. Over residues 9-21 the composition is skewed to basic and acidic residues; that stretch reads DTKEAAAIEARRN. Coiled-coil stretches lie at residues 85-111, 161-241, and 280-304; these read ADRTRRLAKKVQEFREQKQQLKNGREF, RYNL…KANL, and EQRAAIRKEQEVQRSKKEAHRQAEK.

This sequence belongs to the RIB43A family. In terms of assembly, microtubule inner protein component of sperm flagellar doublet microtubules.

The protein resides in the cytoplasm. The protein localises to the cytoskeleton. It localises to the flagellum axoneme. The sequence is that of RIB43A-like with coiled-coils protein 1 (RIBC1) from Macaca fascicularis (Crab-eating macaque).